Consider the following 457-residue polypeptide: Ribosomal protein uS12 methylthiotransferase RimO (457 aa).

The 111-residue stretch at 6 to 116 (PKVGFVSLGC…VMEAVHAALP (111 aa)) folds into the MTTase N-terminal domain. [4Fe-4S] cluster is bound by residues Cys15, Cys51, Cys80, Cys147, Cys151, and Cys154. The Radical SAM core domain occupies 133–370 (LTPRHYAYLK…MARQAEISAA (238 aa)). Residues 373 to 441 (EAKIGSVQQC…EHDLFGDALP (69 aa)) form the TRAM domain.

It belongs to the methylthiotransferase family. RimO subfamily. [4Fe-4S] cluster serves as cofactor.

It localises to the cytoplasm. The enzyme catalyses L-aspartate(89)-[ribosomal protein uS12]-hydrogen + (sulfur carrier)-SH + AH2 + 2 S-adenosyl-L-methionine = 3-methylsulfanyl-L-aspartate(89)-[ribosomal protein uS12]-hydrogen + (sulfur carrier)-H + 5'-deoxyadenosine + L-methionine + A + S-adenosyl-L-homocysteine + 2 H(+). Its function is as follows. Catalyzes the methylthiolation of an aspartic acid residue of ribosomal protein uS12. This Xanthomonas campestris pv. campestris (strain 8004) protein is Ribosomal protein uS12 methylthiotransferase RimO.